The primary structure comprises 169 residues: Ribosome maturation factor RimP (169 aa).

Belongs to the RimP family.

Its subcellular location is the cytoplasm. Functionally, required for maturation of 30S ribosomal subunits. The chain is Ribosome maturation factor RimP from Pseudomonas putida (strain ATCC 700007 / DSM 6899 / JCM 31910 / BCRC 17059 / LMG 24140 / F1).